We begin with the raw amino-acid sequence, 190 residues long: Potassium-transporting ATPase KdpC subunit (190 aa).

A helical transmembrane segment spans residues 10 to 30 (TFLFLLLITGGVYPLLTTALG).

Belongs to the KdpC family. The system is composed of three essential subunits: KdpA, KdpB and KdpC.

It localises to the cell inner membrane. In terms of biological role, part of the high-affinity ATP-driven potassium transport (or Kdp) system, which catalyzes the hydrolysis of ATP coupled with the electrogenic transport of potassium into the cytoplasm. This subunit acts as a catalytic chaperone that increases the ATP-binding affinity of the ATP-hydrolyzing subunit KdpB by the formation of a transient KdpB/KdpC/ATP ternary complex. The sequence is that of Potassium-transporting ATPase KdpC subunit from Escherichia coli O127:H6 (strain E2348/69 / EPEC).